A 287-amino-acid polypeptide reads, in one-letter code: Pyridoxal kinase PdxY (287 aa).

Residues Ser-9 and 44-45 contribute to the substrate site; that span reads TQ. ATP is bound by residues Asp-111, Ala-143, Glu-148, Lys-181, and 208–211; that span reads RPLV. Asp-223 provides a ligand contact to substrate.

Belongs to the pyridoxine kinase family. PdxY subfamily. In terms of assembly, homodimer. Requires Mg(2+) as cofactor.

The enzyme catalyses pyridoxal + ATP = pyridoxal 5'-phosphate + ADP + H(+). It functions in the pathway cofactor metabolism; pyridoxal 5'-phosphate salvage; pyridoxal 5'-phosphate from pyridoxal: step 1/1. In terms of biological role, pyridoxal kinase involved in the salvage pathway of pyridoxal 5'-phosphate (PLP). Catalyzes the phosphorylation of pyridoxal to PLP. The polypeptide is Pyridoxal kinase PdxY (Photorhabdus laumondii subsp. laumondii (strain DSM 15139 / CIP 105565 / TT01) (Photorhabdus luminescens subsp. laumondii)).